The following is a 190-amino-acid chain: NADH-ubiquinone oxidoreductase 75 kDa subunit, mitochondrial (190 aa).

This sequence belongs to the complex I 75 kDa subunit family. Core subunit of respiratory chain NADH dehydrogenase (Complex I) which is composed of 45 different subunits. This is the largest subunit of complex I and it is a component of the iron-sulfur (IP) fragment of the enzyme. Complex I associates with ubiquinol-cytochrome reductase complex (Complex III) to form supercomplexes. Interacts with MDM2 and AKAP1. It depends on [2Fe-2S] cluster as a cofactor. [4Fe-4S] cluster serves as cofactor.

It localises to the mitochondrion inner membrane. The enzyme catalyses a ubiquinone + NADH + 5 H(+)(in) = a ubiquinol + NAD(+) + 4 H(+)(out). Functionally, core subunit of the mitochondrial membrane respiratory chain NADH dehydrogenase (Complex I) which catalyzes electron transfer from NADH through the respiratory chain, using ubiquinone as an electron acceptor. Essential for catalysing the entry and efficient transfer of electrons within complex I. Plays a key role in the assembly and stability of complex I and participates in the association of complex I with ubiquinol-cytochrome reductase complex (Complex III) to form supercomplexes. The sequence is that of NADH-ubiquinone oxidoreductase 75 kDa subunit, mitochondrial from Mesocricetus auratus (Golden hamster).